Here is a 297-residue protein sequence, read N- to C-terminus: Bilin biosynthesis protein MpeU (297 aa).

The protein belongs to the CpcE/RpcE/PecE family.

Functionally, an enzyme involved in the biosynthesis of bilin. In Synechococcus sp. (strain WH8020), this protein is Bilin biosynthesis protein MpeU (mpeU).